Reading from the N-terminus, the 243-residue chain is Ribosomal RNA small subunit methyltransferase G (243 aa).

Residues Gly79, Phe84, 130-131 (AE), and Arg150 each bind S-adenosyl-L-methionine. The interval 219–243 (EKKKQTPNKYPRKPGTPGKDPIGKK) is disordered.

It belongs to the methyltransferase superfamily. RNA methyltransferase RsmG family.

It localises to the cytoplasm. Its function is as follows. Specifically methylates the N7 position of a guanine in 16S rRNA. The chain is Ribosomal RNA small subunit methyltransferase G from Pediococcus pentosaceus (strain ATCC 25745 / CCUG 21536 / LMG 10740 / 183-1w).